Here is an 870-residue protein sequence, read N- to C-terminus: A-kinase anchor protein 2 (870 aa).

Disordered regions lie at residues 14-43 (PGIT…DHHE) and 103-165 (IEKA…SSRD). A Phosphoserine modification is found at Ser-122. Over residues 133–151 (GHSTDQPQDMLGNSLQAPA) the composition is skewed to polar residues. The residue at position 152 (Ser-152) is a Phosphoserine. A compositionally biased stretch (low complexity) spans 152-161 (SPSSSTSSHC). A Glycyl lysine isopeptide (Lys-Gly) (interchain with G-Cter in SUMO1); alternate cross-link involves residue Lys-174. Lys-174 participates in a covalent cross-link: Glycyl lysine isopeptide (Lys-Gly) (interchain with G-Cter in SUMO2); alternate. Residues 213-307 (EEMIELEKER…QQQQLSTSQL (95 aa)) are a coiled coil. The disordered stretch occupies residues 233 to 324 (KNPGIAAKWW…EHLDSIEHTK (92 aa)). The span at 259 to 274 (LESHRKYKERKEKRAQ) shows a compositional bias: basic and acidic residues. Low complexity predominate over residues 275-302 (QEQLQLQQQQQQQLQQLQQLQQQQQQQL). The segment covering 313–324 (AHEHLDSIEHTK) has biased composition (basic and acidic residues). A Phosphoserine modification is found at Ser-347. Residues 409–436 (ESQSAGAGTGNAATQGKEGPYSEPSKRG) are disordered. Positions 410–424 (SQSAGAGTGNAATQG) are enriched in low complexity. Ser-472, Ser-476, and Ser-528 each carry phosphoserine. Positions 506-543 (FSMDNISDSGASNETPNALQENSLADFSLPQTPQTDNP) are enriched in polar residues. Disordered stretches follow at residues 506–577 (FSMD…DPLE) and 595–688 (QVDK…RPEG). Position 537 is a phosphothreonine (Thr-537). The interval 576 to 589 (LEYQAGLLVQNAIQ) is PKA-RII subunit binding domain. Over residues 595-608 (QVDKAEVHTSKEGS) the composition is skewed to basic and acidic residues. Ser-641 is subject to Phosphoserine. Positions 644–665 (QEKRDVLPKILPGEDKTLREKG) are enriched in basic and acidic residues. Residues 720–755 (KLRSRKQRTLSMIEEEIRAAQEREEELKRQRQVRQS) adopt a coiled-coil conformation. Phosphoserine is present on residues Ser-730, Ser-758, Ser-789, and Ser-796. The tract at residues 740–814 (QEREEELKRQ…EAAGAQRPKN (75 aa)) is disordered. The span at 755-774 (STPSPRAQNAPSLPSRTTCY) shows a compositional bias: polar residues.

Its subcellular location is the apical cell membrane. In terms of biological role, binds to regulatory subunit (RII) of protein kinase A. May be involved in establishing polarity in signaling systems or in integrating PKA-RII isoforms with downstream effectors to capture, amplify and focus diffuse, trans-cellular signals carried by cAMP. Binds to and modulates the structure of the actin cytoskeleton. The chain is A-kinase anchor protein 2 from Rattus norvegicus (Rat).